The primary structure comprises 190 residues: Ribose 1,5-bisphosphate phosphokinase PhnN (190 aa).

10–17 (GPSGSGKD) lines the ATP pocket.

The protein belongs to the ribose 1,5-bisphosphokinase family.

The enzyme catalyses alpha-D-ribose 1,5-bisphosphate + ATP = 5-phospho-alpha-D-ribose 1-diphosphate + ADP. It participates in metabolic intermediate biosynthesis; 5-phospho-alpha-D-ribose 1-diphosphate biosynthesis; 5-phospho-alpha-D-ribose 1-diphosphate from D-ribose 5-phosphate (route II): step 3/3. Functionally, catalyzes the phosphorylation of ribose 1,5-bisphosphate to 5-phospho-D-ribosyl alpha-1-diphosphate (PRPP). The polypeptide is Ribose 1,5-bisphosphate phosphokinase PhnN (Pseudomonas fluorescens (strain SBW25)).